The primary structure comprises 450 residues: Phosphoglucosamine mutase (450 aa).

Serine 102 functions as the Phosphoserine intermediate in the catalytic mechanism. 4 residues coordinate Mg(2+): serine 102, aspartate 244, aspartate 246, and aspartate 248. Serine 102 is modified (phosphoserine).

Belongs to the phosphohexose mutase family. Requires Mg(2+) as cofactor. Activated by phosphorylation.

The enzyme catalyses alpha-D-glucosamine 1-phosphate = D-glucosamine 6-phosphate. In terms of biological role, catalyzes the conversion of glucosamine-6-phosphate to glucosamine-1-phosphate. The chain is Phosphoglucosamine mutase from Desulfovibrio desulfuricans (strain ATCC 27774 / DSM 6949 / MB).